A 188-amino-acid chain; its full sequence is MAIMSDKWIKEAVINHSMIRPFAEKQVRVHNKEKIISYGLSSYGYDARVSNEFKIFTNINSTTVDPKNFSEYNLVDREVDVCIIPPNSFALGRTIEYFKIPRDVLVICVGKSTYARCGIIVNVTPLEPEWEGHVTLEFSNTTPLPAKIYANEGACQFLFLKSDQICDTSYADRQGKYMKQVGVTLPLT.

DCTP contacts are provided by residues 111-116 (KSTYAR), 135-137 (TLE), Q156, Y170, K179, and Q180. Catalysis depends on E137, which acts as the Proton donor/acceptor.

This sequence belongs to the dCTP deaminase family. Homotrimer.

It carries out the reaction dCTP + H2O + H(+) = dUTP + NH4(+). It functions in the pathway pyrimidine metabolism; dUMP biosynthesis; dUMP from dCTP (dUTP route): step 1/2. In terms of biological role, catalyzes the deamination of dCTP to dUTP. This Rickettsia africae (strain ESF-5) protein is dCTP deaminase.